Reading from the N-terminus, the 238-residue chain is Ribosomal RNA small subunit methyltransferase E 1 (238 aa).

Belongs to the RNA methyltransferase RsmE family.

It localises to the cytoplasm. The enzyme catalyses uridine(1498) in 16S rRNA + S-adenosyl-L-methionine = N(3)-methyluridine(1498) in 16S rRNA + S-adenosyl-L-homocysteine + H(+). In terms of biological role, specifically methylates the N3 position of the uracil ring of uridine 1498 (m3U1498) in 16S rRNA. Acts on the fully assembled 30S ribosomal subunit. This chain is Ribosomal RNA small subunit methyltransferase E 1 (rsmE1), found in Borreliella burgdorferi (strain ATCC 35210 / DSM 4680 / CIP 102532 / B31) (Borrelia burgdorferi).